The following is a 65-amino-acid chain: Large ribosomal subunit protein bL35 (65 aa).

Belongs to the bacterial ribosomal protein bL35 family.

This is Large ribosomal subunit protein bL35 from Nitrosomonas eutropha (strain DSM 101675 / C91 / Nm57).